The chain runs to 952 residues: UvrABC system protein A (952 aa).

An ATP-binding site is contributed by 31–38 (GVSGSGKS). A C4-type zinc finger spans residues 253–280 (CPEHGSVLEELEPRIFSFNSPYGACPAC). 2 ABC transporter domains span residues 309-591 (WSRG…PQSL) and 611-938 (GNGK…AFLA). Position 643–650 (643–650 (GPSGSGKS)) interacts with ATP. The C4-type zinc finger occupies 742-768 (CEACGGDGTVKIEMLFLPDLYVPCEVC).

The protein belongs to the ABC transporter superfamily. UvrA family. Forms a heterotetramer with UvrB during the search for lesions.

The protein localises to the cytoplasm. Its function is as follows. The UvrABC repair system catalyzes the recognition and processing of DNA lesions. UvrA is an ATPase and a DNA-binding protein. A damage recognition complex composed of 2 UvrA and 2 UvrB subunits scans DNA for abnormalities. When the presence of a lesion has been verified by UvrB, the UvrA molecules dissociate. The chain is UvrABC system protein A from Thermus thermophilus (strain ATCC 27634 / DSM 579 / HB8).